The chain runs to 114 residues: Putative protein TfaS (114 aa).

It belongs to the tfa family.

The sequence is that of Putative protein TfaS (tfaS) from Escherichia coli (strain K12).